The sequence spans 283 residues: ATP phosphoribosyltransferase (283 aa).

The protein belongs to the ATP phosphoribosyltransferase family. Long subfamily. Mg(2+) is required as a cofactor.

The protein resides in the cytoplasm. It catalyses the reaction 1-(5-phospho-beta-D-ribosyl)-ATP + diphosphate = 5-phospho-alpha-D-ribose 1-diphosphate + ATP. It functions in the pathway amino-acid biosynthesis; L-histidine biosynthesis; L-histidine from 5-phospho-alpha-D-ribose 1-diphosphate: step 1/9. Its activity is regulated as follows. Feedback inhibited by histidine. Functionally, catalyzes the condensation of ATP and 5-phosphoribose 1-diphosphate to form N'-(5'-phosphoribosyl)-ATP (PR-ATP). Has a crucial role in the pathway because the rate of histidine biosynthesis seems to be controlled primarily by regulation of HisG enzymatic activity. The protein is ATP phosphoribosyltransferase of Rhodococcus jostii (strain RHA1).